We begin with the raw amino-acid sequence, 489 residues long: Acetylcholine receptor subunit beta (489 aa).

The N-terminal stretch at 1–20 is a signal peptide; it reads NSGALLWPLIWGLLLIGTQA. The Extracellular segment spans residues 21–235; the sequence is LDKEAQLRDK…ITFYLVIQRK (215 aa). Residues Asn135 and Asn161 are each glycosylated (N-linked (GlcNAc...) asparagine). A disulfide bridge links Cys148 with Cys162. 3 helical membrane-spanning segments follow: residues 236 to 260, 268 to 286, and 302 to 323; these read PLFYIVNVIVPCILITILAIFVFYL, MTLSIFALLTLTVFLLLLA, and YLIFTMTLVTFSVIFSVVVLNL. The Cytoplasmic portion of the chain corresponds to 324–457; the sequence is HHRSPNTHHM…WQYVAMVVDR (134 aa). A helical transmembrane segment spans residues 458–476; that stretch reads LFLWTFIAFTSLGTLSIFL.

This sequence belongs to the ligand-gated ion channel (TC 1.A.9) family. Acetylcholine receptor (TC 1.A.9.1) subfamily. Beta-1/CHRNB1 sub-subfamily. In terms of assembly, pentamer of two alpha chains, and one each of the beta, delta, and gamma (in immature muscle) or epsilon (in mature muscle) chains.

The protein resides in the postsynaptic cell membrane. It is found in the cell membrane. It catalyses the reaction K(+)(in) = K(+)(out). The enzyme catalyses Na(+)(in) = Na(+)(out). In terms of biological role, after binding acetylcholine, the AChR responds by an extensive change in conformation that affects all subunits and leads to opening of an ion-conducting channel across the plasma membrane. In Xenopus laevis (African clawed frog), this protein is Acetylcholine receptor subunit beta (chrnb1).